We begin with the raw amino-acid sequence, 125 residues long: Small ribosomal subunit protein eS8 (125 aa).

Belongs to the eukaryotic ribosomal protein eS8 family. In terms of assembly, part of the 30S ribosomal subunit.

The chain is Small ribosomal subunit protein eS8 from Methanosarcina barkeri (strain Fusaro / DSM 804).